The primary structure comprises 414 residues: MRVSVLSIGDELLCGEVVDTNASHIAGRLFQAGGRVERHLTVPDDAEAIVRALTELGARSEAVIVTGGLGPTPDDLTAEAAARAAGTELELSTEALTHLERFAQRITGELHPANRRQALLPSGCRLIPNPLGTALGFVVRIGCADCFFMPGVPFEMERMLEETVLPELRNRFPAGWQRVTLKLFGIAEAAIAELLEGAIPEGSRVQLAYCVKFPEIHLILRASATDAPALQQAAGELRRRLGAYLFAEDREEMDDRLALLLRESGLTLALAESCTGGMIAARITAVAGSSAYFLEGNVTYSNEAKTRMLQVPPPLIAEHGAVSAEVARAMAVGAREAAGSDLALSVTGIAGPDGGTLEKPVGTVYLALADQGSCRVERFNFQGDRDRVRCITCFTALNWLQSYLLTRKTTPGRG.

The protein belongs to the CinA family.

The polypeptide is CinA-like protein (Geobacter sp. (strain M21)).